The chain runs to 414 residues: Phospholipase A1-IIbeta (414 aa).

Residue K19 forms a Glycyl lysine isopeptide (Lys-Gly) (interchain with G-Cter in ubiquitin) linkage. Residues 191-217 (DKTSAQEQVQEELKRLLELYKNEDVTI) adopt a coiled-coil conformation. Catalysis depends on S223, which acts as the Acyl-ester intermediate. Active-site charge relay system residues include S223, D289, and H326. Residues 386 to 414 (DGTWKLNGDRSKKKQEEEDEKEENNCKFP) are disordered. Residues 390–410 (KLNGDRSKKKQEEEDEKEENN) are a coiled coil. Residues 392–401 (NGDRSKKKQE) are compositionally biased toward basic and acidic residues.

It belongs to the AB hydrolase superfamily. Lipase family.

The protein localises to the cytoplasm. Its function is as follows. Acylhydrolase that catalyzes the hydrolysis of phospholipids at the sn-1 position. The sequence is that of Phospholipase A1-IIbeta from Arabidopsis thaliana (Mouse-ear cress).